Here is a 4226-residue protein sequence, read N- to C-terminus: Guanylate cyclase alpha (4226 aa).

The Cytoplasmic portion of the chain corresponds to 1–104; that stretch reads MSDSKKHYNE…SFIFKGLYEQ (104 aa). The chain crosses the membrane as a helical span at residues 105–125; it reads FLRLPNIWFLLISLLEFIPQY. At 126 to 131 the chain is on the extracellular side; that stretch reads QNLSNY. Asparagine 127 carries N-linked (GlcNAc...) asparagine glycosylation. A helical transmembrane segment spans residues 132 to 152; sequence MYYSKHSSFFLLLFFICVSII. Residues 153–337 lie on the Cytoplasmic side of the membrane; it reads KNIYEDSRRS…LGYVNKELNS (185 aa). A helical membrane pass occupies residues 338–358; the sequence is YTIIGLIFTFICVFISVLFKW. Residues 359–392 are Extracellular-facing; sequence TEDDKFRNGSHFFLITVKDNICESIVKYTLLYSN. N-linked (GlcNAc...) asparagine glycosylation occurs at asparagine 366. A helical membrane pass occupies residues 393 to 413; sequence IIPISILISVDLISILQSILI. The Cytoplasmic portion of the chain corresponds to 414–2083; sequence ENDNHISTFE…FIYGSKHLYT (1670 aa). 4 disordered regions span residues 552-572, 832-904, 968-989, and 1740-1765; these read EHSQ…NNIC, SSKN…SNND, INNN…KSSS, and NINK…NNSN. Residues 558 to 570 show a composition bias toward low complexity; sequence DNNNNNDNNNNNN. Acidic residues predominate over residues 838–847; the sequence is TLDDPTELIS. The segment covering 854 to 873 has biased composition (basic and acidic residues); that stretch reads LRDKYEHTSDKKNDTNKNRD. Low complexity predominate over residues 874–904; that stretch reads GANNSNNNNNKDVSNNKNKNNNNYNYNSNND. Over residues 1745–1754 the composition is skewed to basic and acidic residues; the sequence is YKYDKNDKHN. The segment covering 1755 to 1765 has biased composition (low complexity); sequence NNNNNNNNNSN. Residues 2084–2104 form a helical membrane-spanning segment; the sequence is ISIILYWNFFKNILLILPIFF. Over 2105–2119 the chain is Extracellular; the sequence is YQAYASWSCVKIYPE. Residues 2120-2140 traverse the membrane as a helical segment; that stretch reads LLYTFFSIFWVFIPIIYYMFL. Residues 2141–2169 are Cytoplasmic-facing; that stretch reads QHNLNYDILYNIPLFYALSRRRYNMNCFK. Residues 2170–2190 form a helical membrane-spanning segment; the sequence is FLPWIFEAIFYSMIIYFFAYA. The Extracellular segment spans residues 2191 to 2202; it reads ALKENSHLNNGE. A helical membrane pass occupies residues 2203–2223; the sequence is VITINTFGNICFIGCLLISIL. Residues 2224–2235 are Cytoplasmic-facing; the sequence is RLFLEGSLWSPS. The chain crosses the membrane as a helical span at residues 2236 to 2256; that stretch reads ILITCFGCFLFVFFPSLLFIC. Residues 2257–2275 lie on the Extracellular side of the membrane; the sequence is FAYLSNEYIREVFRQTFLW. A helical transmembrane segment spans residues 2276 to 2296; the sequence is APLYVLLILWFSTCIISYIFI. The Cytoplasmic segment spans residues 2297–2787; that stretch reads NFTKSILFPN…QIHKKNKFYK (491 aa). The interval 2477 to 2505 is disordered; that stretch reads NNDNNNDDNDNDNNNNNNNNDNYNNNDHN. Low complexity predominate over residues 2488 to 2502; the sequence is DNNNNNNNNDNYNNN. A helical membrane pass occupies residues 2788-2808; the sequence is TFTPWYRFIFLLLGVFFLYVW. The Extracellular segment spans residues 2809 to 2828; sequence KLESSLSQLWNMPSDASTDV. A helical membrane pass occupies residues 2829 to 2849; it reads FILFLSLLLELVLLAATVTTF. Topologically, residues 2850-2860 are cytoplasmic; it reads FSNIFIENFNK. The helical transmembrane segment at 2861–2881 threads the bilayer; sequence IISAVVILIITYHVVSYSVTH. The Extracellular segment spans residues 2882–2900; that stretch reads IDGVFQAVLFPLYTFVILR. A helical membrane pass occupies residues 2901–2921; that stretch reads LPFVNAVLCNIIFLGLFIIRF. Topologically, residues 2922–2930 are cytoplasmic; the sequence is NGDHFLDKK. Residues 2931 to 2951 form a helical membrane-spanning segment; it reads GLAHYIPLFIGVDVFVGFVGY. Topologically, residues 2952 to 3008 are extracellular; the sequence is RLEYNQRKNFLLEYSVESSRRKQREILNTMLPPFVVDEMIYSELNEEGIPISLKAED. A helical transmembrane segment spans residues 3009–3029; it reads ISTVTIIFCDIYDFQNIVASI. One can recognise a Guanylate cyclase 1 domain in the interval 3013–3270; sequence TIIFCDIYDF…DTVNTASRMK (258 aa). Residues 3030–3738 lie on the Cytoplasmic side of the membrane; that stretch reads EPTRLVEVLD…SNINSIEQAL (709 aa). Disordered stretches follow at residues 3077 to 3150 and 3201 to 3230; these read EDEL…FEED and DAND…NNKP. 2 stretches are compositionally biased toward low complexity: residues 3083 to 3098 and 3108 to 3138; these read NKYS…NYYY and NNNN…NNVN. Residues 3140–3150 show a composition bias toward acidic residues; it reads SDDDGDFFEED. Basic and acidic residues predominate over residues 3201-3220; it reads DANDDTHNVNDSFNNDKAEN. The helical transmembrane segment at 3739–3759 threads the bilayer; that stretch reads IIFLVTFVMQTLISSTVSIVF. At 3760–3773 the chain is on the extracellular side; the sequence is IDHKRATQTLHINY. The chain crosses the membrane as a helical span at residues 3774 to 3794; it reads FAYWSVRSVYTFFGFVLWLLF. Residues 3795 to 3811 are Cytoplasmic-facing; it reads HYRTRPEVSSLLNIKWM. A helical transmembrane segment spans residues 3812–3832; sequence IFFLNLLFISAACVFSIAYLW. Topologically, residues 3833-3840 are extracellular; it reads AISETDQT. Residues 3841–3861 traverse the membrane as a helical segment; that stretch reads TSYTIWMTNDTIEFFFYLVIL. The Cytoplasmic segment spans residues 3862–3871; that stretch reads HHNTGMLFQT. The helical transmembrane segment at 3872-3892 threads the bilayer; the sequence is CILVDLLFITMSLTFIATSVV. Residue lysine 3893 is a topological domain, extracellular. A helical transmembrane segment spans residues 3894-3914; that stretch reads TITTDSTVLLIPWYVAFNLIS. The Cytoplasmic segment spans residues 3915 to 4226; the sequence is TYCKESIDRR…INVNDRQSNL (312 aa). In terms of domain architecture, Guanylate cyclase 2 spans 3970-4104; the sequence is TFLFADICGF…IDVLTGNLME (135 aa). Aspartate 3975, isoleucine 3976, and aspartate 4019 together coordinate Mg(2+).

The protein in the N-terminal section; belongs to the cation transport ATPase (P-type) (TC 3.A.3) family. Type IV subfamily. This sequence in the C-terminal section; belongs to the adenylyl cyclase class-4/guanylyl cyclase family. Mg(2+) serves as cofactor. It depends on Mn(2+) as a cofactor.

It localises to the cell membrane. Its subcellular location is the cytoplasmic vesicle membrane. The enzyme catalyses GTP = 3',5'-cyclic GMP + diphosphate. In terms of biological role, catalyzes the synthesis of the second messenger cGMP from GTP. In asexual blood stage schizonts, required for cGMP production which is essential for PKG activation, PKG-dependent Ca(2+) release, and ultimately merozoite egress from host erythrocytes. The chain is Guanylate cyclase alpha from Plasmodium falciparum (isolate 3D7).